A 200-amino-acid polypeptide reads, in one-letter code: Putative HTH-type transcriptional regulator YhjB (200 aa).

The 66-residue stretch at 135-200 (DIKDLKSLSA…QAAMMLNISS (66 aa)) folds into the HTH luxR-type domain. The H-T-H motif DNA-binding region spans 159–178 (NKEIGRALNISTGTVKAHLE).

The sequence is that of Putative HTH-type transcriptional regulator YhjB (yhjB) from Escherichia coli (strain K12).